A 416-amino-acid chain; its full sequence is Phosphoglycerate kinase (416 aa).

Residues Val23, Asp24, Phe25, Asn26, Arg39, Ser62, His63, Gly65, Arg66, Leu121, Arg122, His169, and Arg170 each coordinate (2R)-3-phosphoglycerate. Gly213 is an ADP binding site. Gly213 serves as a coordination point for CDP. The AMP site is built by Ala214 and Lys215. Ala214 contacts ATP. Ala214 serves as a coordination point for Mg(2+). Asp218 provides a ligand contact to CDP. Position 218 (Asp218) interacts with Mg(2+). Lys219 provides a ligand contact to AMP. Position 219 (Lys219) interacts with ATP. Gly237 serves as a coordination point for ADP. Gly237 serves as a coordination point for CDP. AMP-binding residues include Gly238 and Gly312. ATP contacts are provided by Gly238 and Gly312. Gly337 and Phe342 together coordinate CDP. Position 342 (Phe342) interacts with ADP. Glu343 serves as a coordination point for AMP. The ATP site is built by Glu343, Asp374, and Thr375. Asp374 contacts Mg(2+).

It belongs to the phosphoglycerate kinase family. Monomer. The cofactor is Mg(2+).

Its subcellular location is the cytoplasm. It is found in the mitochondrion. The catalysed reaction is (2R)-3-phosphoglycerate + ATP = (2R)-3-phospho-glyceroyl phosphate + ADP. It participates in carbohydrate degradation; glycolysis; pyruvate from D-glyceraldehyde 3-phosphate: step 2/5. Functionally, catalyzes one of the two ATP producing reactions in the glycolytic pathway via the reversible conversion of 1,3-diphosphoglycerate to 3-phosphoglycerate. Both L- and D- forms of purine and pyrimidine nucleotides can be used as substrates, but the activity is much lower on pyrimidines. Negatively regulates the biosynthesis of acetyl-CoA from pyruvate in the mitochondrion. This is Phosphoglycerate kinase (pgkA) from Agaricus bisporus (White button mushroom).